The chain runs to 528 residues: Carboxysome shell carbonic anhydrase (528 aa).

Positions 17–47 (PIAPNPRWQKENPTAHGSTDTGGFGYNGGNE) are disordered. Cys-184 contributes to the Zn(2+) binding site. Asp-186 acts as the Proton acceptor in catalysis. Zn(2+) is bound by residues His-252 and Cys-263.

It belongs to the beta-class carbonic anhydrase family. CsoSCA subfamily. As to quaternary structure, homodimer. Zn(2+) is required as a cofactor.

It localises to the carboxysome. The enzyme catalyses hydrogencarbonate + H(+) = CO2 + H2O. Inhibited by ethoxyzolamide and dithiothreitol (in crude extracts upon expression in E.coli). Its function is as follows. Reversible hydration of carbon dioxide. This bacteria encodes at least 3 CA enzymes. Essential for chemolithotrophic carbon dioxide fixation, supplies CO(2) to RuBisCO (ribulose bisphosphate carboxylase, cbbL-cbbS) in the carboxysome. In Hydrogenovibrio crunogenus (strain DSM 25203 / XCL-2) (Thiomicrospira crunogena), this protein is Carboxysome shell carbonic anhydrase.